The following is a 381-amino-acid chain: Metallophosphoesterase 1 (381 aa).

The helical transmembrane segment at 15-35 (LIFAFVSVFVFCEYVIYYLVI) threads the bilayer. Positions 59, 101, 139, 234, 288, and 290 each coordinate a divalent metal cation. The helical transmembrane segment at 341–361 (TVLVVYCSSCLIIALITLIHL) threads the bilayer. Positions 377–381 (KHKTL) match the Di-lysine motif motif.

The protein belongs to the metallophosphoesterase superfamily. MPPE1 family. Requires Mn(2+) as cofactor.

It localises to the endoplasmic reticulum-Golgi intermediate compartment membrane. Functionally, metallophosphoesterase that catalyzes the removal of a side-chain ethanolamine-phosphate (EtNP) from the second mannose of the GPI-anchor protein intermediate. Participates in the glycan remodeling steps of GPI-anchor maturation to allow an efficient transport of GPI-anchor proteins from the endoplasmic reticulum to the Golgi. This chain is Metallophosphoesterase 1, found in Danio rerio (Zebrafish).